A 307-amino-acid chain; its full sequence is NAD(+) hydrolase TcpC (307 aa).

A helical membrane pass occupies residues 22-42 (YNILFFIFLSIAIPFLLFLAW). Residues 169–303 (THYDFFISHA…EIARELAEIA (135 aa)) enclose the TIR domain. NAD(+)-binding positions include 178 to 179 (AK) and Glu208. Residue Glu244 is part of the active site.

Interacts with host MYD88. Interacts with host TLR4.

Its subcellular location is the secreted. It localises to the membrane. The catalysed reaction is NAD(+) + H2O = ADP-D-ribose + nicotinamide + H(+). It catalyses the reaction NADP(+) + H2O = ADP-D-ribose 2'-phosphate + nicotinamide + H(+). Its function is as follows. Virulence factor that suppresses host Toll-like receptor (TLR)-mediated cytokine production upon infection, thereby increasing bacterial burden in the urinary tract and promoting renal tissue damage. Acts as a NAD(+) hydrolase (NADase) by catalyzing cleavage of NAD(+) into ADP-D-ribose (ADPR) and nicotinamide. Also able to hydrolyze NADP(+), but not other NAD(+)-related molecules. This Escherichia coli O6:H1 (strain CFT073 / ATCC 700928 / UPEC) protein is NAD(+) hydrolase TcpC.